Reading from the N-terminus, the 434-residue chain is Ribosomal protein uS12 methylthiotransferase RimO (434 aa).

Residues 6–122 enclose the MTTase N-terminal domain; that stretch reads SKLYLLTLGC…IIAELGGHYK (117 aa). Residues Cys15, Cys51, Cys85, Cys146, Cys150, and Cys153 each contribute to the [4Fe-4S] cluster site. The Radical SAM core domain maps to 132–361; the sequence is LTPPYFSYLK…MAAQEEIAYA (230 aa). In terms of domain architecture, TRAM spans 364 to 434; sequence QALVGSFMPV…AFDLFGSLVL (71 aa).

The protein belongs to the methylthiotransferase family. RimO subfamily. [4Fe-4S] cluster serves as cofactor.

It is found in the cytoplasm. It carries out the reaction L-aspartate(89)-[ribosomal protein uS12]-hydrogen + (sulfur carrier)-SH + AH2 + 2 S-adenosyl-L-methionine = 3-methylsulfanyl-L-aspartate(89)-[ribosomal protein uS12]-hydrogen + (sulfur carrier)-H + 5'-deoxyadenosine + L-methionine + A + S-adenosyl-L-homocysteine + 2 H(+). Functionally, catalyzes the methylthiolation of an aspartic acid residue of ribosomal protein uS12. In Chloroherpeton thalassium (strain ATCC 35110 / GB-78), this protein is Ribosomal protein uS12 methylthiotransferase RimO.